A 188-amino-acid polypeptide reads, in one-letter code: Protein GrpE (188 aa).

A compositionally biased stretch (polar residues) spans 1–10; it reads MPDPTQNPNV. Residues 1–35 form a disordered region; sequence MPDPTQNPNVTPELEQHAAPEAAAEAAPESSADVM. Positions 19-32 are enriched in low complexity; sequence APEAAAEAAPESSA.

It belongs to the GrpE family. As to quaternary structure, homodimer.

It localises to the cytoplasm. Functionally, participates actively in the response to hyperosmotic and heat shock by preventing the aggregation of stress-denatured proteins, in association with DnaK and GrpE. It is the nucleotide exchange factor for DnaK and may function as a thermosensor. Unfolded proteins bind initially to DnaJ; upon interaction with the DnaJ-bound protein, DnaK hydrolyzes its bound ATP, resulting in the formation of a stable complex. GrpE releases ADP from DnaK; ATP binding to DnaK triggers the release of the substrate protein, thus completing the reaction cycle. Several rounds of ATP-dependent interactions between DnaJ, DnaK and GrpE are required for fully efficient folding. This Azoarcus sp. (strain BH72) protein is Protein GrpE.